Reading from the N-terminus, the 225-residue chain is RNA chaperone ProQ (225 aa).

Residues 107–169 are disordered; it reads KARVQAQRAA…VAAKAPREER (63 aa). Positions 109-118 are enriched in low complexity; sequence RVQAQRAAQQ. Over residues 137–146 the composition is skewed to basic residues; it reads RERKPRPQQP. A compositionally biased stretch (basic and acidic residues) spans 147-156; sequence RRKEGAEQRK.

The protein belongs to the ProQ family.

The protein localises to the cytoplasm. Its function is as follows. RNA chaperone with significant RNA binding, RNA strand exchange and RNA duplexing activities. May regulate ProP activity through an RNA-based, post-transcriptional mechanism. This is RNA chaperone ProQ from Klebsiella pneumoniae subsp. pneumoniae (strain ATCC 700721 / MGH 78578).